The chain runs to 78 residues: Large ribosomal subunit protein bL28 (78 aa).

This sequence belongs to the bacterial ribosomal protein bL28 family.

The protein is Large ribosomal subunit protein bL28 of Colwellia psychrerythraea (strain 34H / ATCC BAA-681) (Vibrio psychroerythus).